The sequence spans 1729 residues: Cullin-7 (1729 aa).

Positions D350–H388 are disordered. Residue S371 is modified to Phosphoserine. The CPH domain occupies R392–F465. Residues S632–E642 show a composition bias toward basic and acidic residues. Positions S632 to R654 are disordered. The DOC domain occupies P845–A1024. The tract at residues V1373–E1405 is disordered. K1607 is covalently cross-linked (Glycyl lysine isopeptide (Lys-Gly) (interchain with G-Cter in NEDD8)).

The protein belongs to the cullin family. As to quaternary structure, component of the 3M complex, composed of core components CUL7, CCDC8 and OBSL1. Component of the Cul7-RING(FBXW8) complex consisting of CUL7, RBX1, SKP1 and FBXW8. Within the Cul7-RING(FBXW8) complex interacts with FBXW8 and RBX1, but not with SKP1. Interacts with CUL1 (via the C-terminal domain); the interaction seems to be mediated by FBXW8; it is likely specific to FBXW8, but not other F-box proteins. Interacts (via the CPH domain) with p53/TP53; the interaction preferentially involves tetrameric and dimeric p53/TP53; this interaction recruits p53/TP53 for ubiquitination by neddylated CUL1-RBX1. The CUL7-CUL9 heterodimer seems to interact specifically with p53/TP53. Interacts with FBXW8; interaction is mutually exclusive of binding to CUL9 or p53/TP53. Interacts with CUL9; leading to inhibited CUL9 activity. Interacts with OBSL1. Interacts (as part of the 3M complex) with HDAC4 and HDAC5; it is negatively regulated by ANKRA2.

The protein resides in the cytoplasm. Its subcellular location is the cytoskeleton. It localises to the microtubule organizing center. The protein localises to the centrosome. It is found in the perinuclear region. The protein resides in the golgi apparatus. The protein operates within protein modification; protein ubiquitination. Its function is as follows. Core component of the 3M and Cul7-RING(FBXW8) complexes, which mediate the ubiquitination and subsequent proteasomal degradation of target proteins. Core component of the 3M complex, a complex required to regulate microtubule dynamics and genome integrity. It is unclear how the 3M complex regulates microtubules, it could act by controlling the level of a microtubule stabilizer. The Cul7-RING(FBXW8) complex alone lacks ubiquitination activity and does not promote polyubiquitination and proteasomal degradation of p53/TP53. However it mediates recruitment of p53/TP53 for ubiquitination by neddylated CUL1-RBX1. Interaction with CUL9 is required to inhibit CUL9 activity and ubiquitination of BIRC5. The Cul7-RING(FBXW8) complex also mediates ubiquitination and consequent degradation of target proteins such as GORASP1, IRS1 and MAP4K1/HPK1. Ubiquitination of GORASP1 regulates Golgi morphogenesis and dendrite patterning in brain. Mediates ubiquitination and degradation of IRS1 in a mTOR-dependent manner: the Cul7-RING(FBXW8) complex recognizes and binds IRS1 previously phosphorylated by S6 kinase (RPS6KB1 or RPS6KB2). The Cul7-RING(FBXW8) complex also mediates ubiquitination of MAP4K1/HPK1: recognizes and binds autophosphorylated MAP4K1/HPK1, leading to its degradation, thereby affecting cell proliferation and differentiation. Acts as a regulator in trophoblast cell epithelial-mesenchymal transition and placental development. While the Cul7-RING(FBXW8) and the 3M complexes are associated and involved in common processes, CUL7 and the Cul7-RING(FBXW8) complex may have additional functions. Probably plays a role in the degradation of proteins involved in endothelial proliferation and/or differentiation. This is Cullin-7 (CUL7) from Pongo abelii (Sumatran orangutan).